Reading from the N-terminus, the 468-residue chain is Inositol polyphosphate 5-phosphatase K (468 aa).

The interval 34–337 (VHVVTWNVAS…SDHKPVTGTF (304 aa)) is catalytic. Residues 318–448 (NYVSHMAYSI…HSVVGISQPF (131 aa)) form a required for interaction with GPR78 and PAK1 region. Positions 340–468 (ELNPLMSVPL…DTLYEPEPQI (129 aa)) are required for ruffle localization.

It belongs to the inositol 1,4,5-trisphosphate 5-phosphatase type II family. In terms of assembly, interacts with GPR78; necessary for INPP5K localization at the endoplasmic reticulum. Interacts with PAK1; competes with GPR78. In terms of tissue distribution, expressed in the skeletal muscle and the eye.

It localises to the endoplasmic reticulum. It is found in the cytoplasm. It carries out the reaction 1D-myo-inositol 1,4,5-trisphosphate + H2O = 1D-myo-inositol 1,4-bisphosphate + phosphate. It catalyses the reaction 1,2-dioctanoyl-sn-glycero-3-phospho-(1D-myo-inositol-3,4,5-trisphosphate) + H2O = 1,2-dioctanoyl-sn-glycero-3-phospho-(1D-myo-inositol-3,4-bisphosphate) + phosphate. The catalysed reaction is 1D-myo-inositol 1,3,4,5-tetrakisphosphate + H2O = 1D-myo-inositol 1,3,4-trisphosphate + phosphate. The enzyme catalyses a 1,2-diacyl-sn-glycero-3-phospho-(1D-myo-inositol-4,5-bisphosphate) + H2O = a 1,2-diacyl-sn-glycero-3-phospho-(1D-myo-inositol 4-phosphate) + phosphate. It carries out the reaction a 1,2-diacyl-sn-glycero-3-phospho-(1D-myo-inositol-3,4,5-trisphosphate) + H2O = a 1,2-diacyl-sn-glycero-3-phospho-(1D-myo-inositol-3,4-bisphosphate) + phosphate. Inositol 5-phosphatase which acts on inositol 1,4,5-trisphosphate, inositol 1,3,4,5-tetrakisphosphate, phosphatidylinositol 4,5-bisphosphate and phosphatidylinositol 3,4,5-trisphosphate. Has 6-fold higher affinity for phosphatidylinositol 4,5-bisphosphate than for inositol 1,4,5-trisphosphate. Negatively regulates assembly of the actin cytoskeleton. Controls insulin-dependent glucose uptake among inositol 3,4,5-trisphosphate phosphatases; therefore, is the specific regulator for insulin signaling in skeletal muscle. In Mus musculus (Mouse), this protein is Inositol polyphosphate 5-phosphatase K.